A 55-amino-acid polypeptide reads, in one-letter code: Probable Rubredoxin-2 (55 aa).

A Rubredoxin-like domain is found at 4 to 54 (MARYQCMCGWVYDEDKGEPSQNIPPGTKFEDLPDTFRCPQCGLGKNAFRKI). Positions 9, 11, 41, and 44 each coordinate Fe cation.

It belongs to the rubredoxin family. Requires Fe(3+) as cofactor.

Rubredoxin is a small nonheme, iron protein lacking acid-labile sulfide. Its single Fe, chelated to 4 Cys, functions as an electron acceptor and may also stabilize the conformation of the molecule. The polypeptide is Probable Rubredoxin-2 (Methanocaldococcus jannaschii (strain ATCC 43067 / DSM 2661 / JAL-1 / JCM 10045 / NBRC 100440) (Methanococcus jannaschii)).